Here is a 139-residue protein sequence, read N- to C-terminus: MRGSTQGCSPTGREAIVLDTGAFIAGKAAALPGRLATPPRVLEEVRDRGSRSLLELLQSTGRLEVLAPSTRALERAREEARRAGVLGRLSGADLEVLALALDLAWQGCRVAVATDDYTLQRLAARLGLGVVRLRYRGAV.

In terms of domain architecture, PINc spans 14–121; the sequence is EAIVLDTGAF…VATDDYTLQR (108 aa). Aspartate 19 lines the Mg(2+) pocket.

It belongs to the PINc/VapC protein family. It depends on Mg(2+) as a cofactor.

Toxic component of a type II toxin-antitoxin (TA) system. An RNase. The chain is Ribonuclease VapC3 from Aeropyrum pernix (strain ATCC 700893 / DSM 11879 / JCM 9820 / NBRC 100138 / K1).